Reading from the N-terminus, the 323-residue chain is tRNA dimethylallyltransferase (323 aa).

12–19 (GPTAAGKT) contributes to the ATP binding site. Residue 14 to 19 (TAAGKT) coordinates substrate. Interaction with substrate tRNA regions lie at residues 37 to 40 (DSAL) and 161 to 165 (QRLSR).

Belongs to the IPP transferase family. In terms of assembly, monomer. Requires Mg(2+) as cofactor.

The catalysed reaction is adenosine(37) in tRNA + dimethylallyl diphosphate = N(6)-dimethylallyladenosine(37) in tRNA + diphosphate. Catalyzes the transfer of a dimethylallyl group onto the adenine at position 37 in tRNAs that read codons beginning with uridine, leading to the formation of N6-(dimethylallyl)adenosine (i(6)A). In Pseudomonas fluorescens (strain Pf0-1), this protein is tRNA dimethylallyltransferase.